Consider the following 431-residue polypeptide: MNSHYQNHSLENFFSTNLSATDDAVFAGIQAEFTRQNEQIELIASENIVSKAVMQAQGTCLTNKYAEGYPGRRYYGGCEHVDTVEAIAIERAKKLFNCEYANVQPHSGAQANGAVKLALLQPGDTIMGMSLDAGGHLTHGARPALSGKWFNAVQYGVDKETLEINYDDVRALAVEHKPKMIIAGGSAIPRVIDFAKFREIADEVGAILMVDMAHIAGLIATGAHPSPLPHAHVVTTTTHKTLRGPRGGMILTNHEEIIKKINSAVFPGLQGGPLMHVIAAKAVAFGEALGPEFKTYIDSVIDNAKVLAEVLQTRGCDIVTGGTDTHLMLVDLRPKGLKGNKAEEALERAGITCNKNGIPFDTEKPMITSGVRLGTPAGTSRGFGAEEFKLIGHWIGDVLDGLVENPEGNAEVEQRVRKEVKALCSRFPLYQ.

(6S)-5,6,7,8-tetrahydrofolate contacts are provided by residues L131 and 135–137; that span reads GHL. N6-(pyridoxal phosphate)lysine is present on K240. E256 lines the (6S)-5,6,7,8-tetrahydrofolate pocket.

Belongs to the SHMT family. In terms of assembly, homodimer. Pyridoxal 5'-phosphate serves as cofactor.

The protein localises to the cytoplasm. The catalysed reaction is (6R)-5,10-methylene-5,6,7,8-tetrahydrofolate + glycine + H2O = (6S)-5,6,7,8-tetrahydrofolate + L-serine. It participates in one-carbon metabolism; tetrahydrofolate interconversion. It functions in the pathway amino-acid biosynthesis; glycine biosynthesis; glycine from L-serine: step 1/1. In terms of biological role, catalyzes the reversible interconversion of serine and glycine with tetrahydrofolate (THF) serving as the one-carbon carrier. This reaction serves as the major source of one-carbon groups required for the biosynthesis of purines, thymidylate, methionine, and other important biomolecules. Also exhibits THF-independent aldolase activity toward beta-hydroxyamino acids, producing glycine and aldehydes, via a retro-aldol mechanism. The polypeptide is Serine hydroxymethyltransferase 2 (Vibrio vulnificus (strain CMCP6)).